Consider the following 303-residue polypeptide: E3 ubiquitin-protein ligase CCNB1IP1 homolog (303 aa).

The RING-type; degenerate zinc finger occupies 3 to 42; sequence CNACWRELEGQAVSTTCGHLLCTEDAKKILSNDAACPICD. A coiled-coil region spans residues 119–184; it reads LEEVHTAYQK…YESAKRSAIQ (66 aa). A disordered region spans residues 201-268; sequence VPNIMDSSDP…DIRPRQPARP (68 aa).

Interacts with ZIP4 and PTD. As to expression, expressed in young panicles.

The protein localises to the nucleus. The protein resides in the chromosome. It catalyses the reaction S-ubiquitinyl-[E2 ubiquitin-conjugating enzyme]-L-cysteine + [acceptor protein]-L-lysine = [E2 ubiquitin-conjugating enzyme]-L-cysteine + N(6)-ubiquitinyl-[acceptor protein]-L-lysine.. It participates in protein modification; protein ubiquitination. In terms of biological role, ubiquitin E3 ligase required for class I crossover (CO) formation during meiosis. The chain is E3 ubiquitin-protein ligase CCNB1IP1 homolog from Oryza sativa subsp. japonica (Rice).